Here is a 432-residue protein sequence, read N- to C-terminus: Trigger factor (432 aa).

Residues 161-246 (EDRVTIDFTG…LKKVEERELP (86 aa)) form the PPIase FKBP-type domain.

The protein belongs to the FKBP-type PPIase family. Tig subfamily.

The protein localises to the cytoplasm. The catalysed reaction is [protein]-peptidylproline (omega=180) = [protein]-peptidylproline (omega=0). In terms of biological role, involved in protein export. Acts as a chaperone by maintaining the newly synthesized protein in an open conformation. Functions as a peptidyl-prolyl cis-trans isomerase. The sequence is that of Trigger factor from Citrobacter koseri (strain ATCC BAA-895 / CDC 4225-83 / SGSC4696).